The sequence spans 217 residues: Octanoyltransferase (217 aa).

Positions 32-207 (SESHDELWIV…TFSQLLGYQH (176 aa)) constitute a BPL/LPL catalytic domain. Residues 71–78 (RGGQVTYH), 138–140 (SLG), and 151–153 (GLA) each bind substrate. C169 (acyl-thioester intermediate) is an active-site residue.

Belongs to the LipB family.

It is found in the cytoplasm. The catalysed reaction is octanoyl-[ACP] + L-lysyl-[protein] = N(6)-octanoyl-L-lysyl-[protein] + holo-[ACP] + H(+). The protein operates within protein modification; protein lipoylation via endogenous pathway; protein N(6)-(lipoyl)lysine from octanoyl-[acyl-carrier-protein]: step 1/2. In terms of biological role, catalyzes the transfer of endogenously produced octanoic acid from octanoyl-acyl-carrier-protein onto the lipoyl domains of lipoate-dependent enzymes. Lipoyl-ACP can also act as a substrate although octanoyl-ACP is likely to be the physiological substrate. This chain is Octanoyltransferase, found in Shewanella baltica (strain OS223).